We begin with the raw amino-acid sequence, 61 residues long: Photosystem II reaction center protein K (61 aa).

Positions 1–24 (MLNIFSLICICLHSTLYSSSFFLA) are excised as a propeptide. Residues 36–56 (IVDFMPVIPLLFFLLAFVWQA) form a helical membrane-spanning segment.

It belongs to the PsbK family. PSII is composed of 1 copy each of membrane proteins PsbA, PsbB, PsbC, PsbD, PsbE, PsbF, PsbH, PsbI, PsbJ, PsbK, PsbL, PsbM, PsbT, PsbX, PsbY, PsbZ, Psb30/Ycf12, at least 3 peripheral proteins of the oxygen-evolving complex and a large number of cofactors. It forms dimeric complexes.

It localises to the plastid. The protein localises to the chloroplast thylakoid membrane. One of the components of the core complex of photosystem II (PSII). PSII is a light-driven water:plastoquinone oxidoreductase that uses light energy to abstract electrons from H(2)O, generating O(2) and a proton gradient subsequently used for ATP formation. It consists of a core antenna complex that captures photons, and an electron transfer chain that converts photonic excitation into a charge separation. The protein is Photosystem II reaction center protein K of Eucalyptus globulus subsp. globulus (Tasmanian blue gum).